The chain runs to 473 residues: Photosystem II CP43 reaction center protein (473 aa).

Residues 1–14 (MKTLYSLRRFYHVE) constitute a propeptide that is removed on maturation. Residue Thr-15 is modified to N-acetylthreonine. Thr-15 is subject to Phosphothreonine. 5 helical membrane passes run 69 to 93 (LFEV…PHLA), 134 to 155 (LLGP…KDRN), 178 to 200 (KALY…RKIT), 255 to 275 (KPFA…LSYS), and 291 to 312 (WFNN…ASQA). Glu-367 contributes to the [CaMn4O5] cluster binding site. The helical transmembrane segment at 447-471 (RARAAAAGFEKGIDRDFEPVLSMTP) threads the bilayer.

It belongs to the PsbB/PsbC family. PsbC subfamily. As to quaternary structure, PSII is composed of 1 copy each of membrane proteins PsbA, PsbB, PsbC, PsbD, PsbE, PsbF, PsbH, PsbI, PsbJ, PsbK, PsbL, PsbM, PsbT, PsbX, PsbY, PsbZ, Psb30/Ycf12, at least 3 peripheral proteins of the oxygen-evolving complex and a large number of cofactors. It forms dimeric complexes. Requires Binds multiple chlorophylls and provides some of the ligands for the Ca-4Mn-5O cluster of the oxygen-evolving complex. It may also provide a ligand for a Cl- that is required for oxygen evolution. PSII binds additional chlorophylls, carotenoids and specific lipids. as cofactor.

Its subcellular location is the plastid. It localises to the chloroplast thylakoid membrane. Functionally, one of the components of the core complex of photosystem II (PSII). It binds chlorophyll and helps catalyze the primary light-induced photochemical processes of PSII. PSII is a light-driven water:plastoquinone oxidoreductase, using light energy to abstract electrons from H(2)O, generating O(2) and a proton gradient subsequently used for ATP formation. The protein is Photosystem II CP43 reaction center protein of Coffea arabica (Arabian coffee).